The sequence spans 84 residues: NADH dehydrogenase [ubiquinone] 1 alpha subcomplex subunit 3 (84 aa).

Residue alanine 2 is modified to N-acetylalanine. Residues 19 to 39 form a helical membrane-spanning segment; sequence LVVSFSVWGLAIIMPMISPYT. The tract at residues 59–84 is disordered; sequence DDGNMPDVPSHPQDPLGPSLDWLKNL.

The protein belongs to the complex I NDUFA3 subunit family. As to quaternary structure, complex I is composed of 45 different subunits.

It localises to the mitochondrion inner membrane. Functionally, accessory subunit of the mitochondrial membrane respiratory chain NADH dehydrogenase (Complex I), that is believed not to be involved in catalysis. Complex I functions in the transfer of electrons from NADH to the respiratory chain. The immediate electron acceptor for the enzyme is believed to be ubiquinone. This chain is NADH dehydrogenase [ubiquinone] 1 alpha subcomplex subunit 3 (Ndufa3), found in Mus musculus (Mouse).